We begin with the raw amino-acid sequence, 375 residues long: MSTAGKVIKCKAAVLWELKKPFSIEEVEVAPPKAHEVRIKMVAAGICRSDEHVVSGNLVTPLPVILGHEAAGIVESVGEGVTTVKPGDKVIPLFTPQCGKCRICKNPESNYCLKNDLGNPRGTLQDGTRRFTCSGKPIHHFVGVSTFSQYTVVDENAVAKIDAASPLEKVCLIGCGFSTGYGSAVKVAKVTPGSTCAVFGLGGVGLSVVMGCKAAGAARIIAVDINKDKFAKAKELGATECINPQDYKKPIQEVLKEMTDGGVDFSFEVIGRLDTMMASLLCCHEACGTSVIVGVPPDSQNLSINPMLLLTGRTWKGAIFGGFKSKESVPKLVADFMAKKFSLDALITNILPFEKINEGFDLLRSGKSIRTVLTF.

Residue Ser-2 is modified to N-acetylserine. Ser-23 bears the Phosphoserine mark. Zn(2+)-binding residues include Cys-47, His-68, Cys-98, Cys-101, Cys-104, Cys-112, and Cys-175. Residues 200-205 (GLGGVG), Asp-224, Lys-229, Ile-270, 293-295 (VGV), 318-320 (AIF), and Arg-370 each bind NAD(+).

This sequence belongs to the zinc-containing alcohol dehydrogenase family. As to quaternary structure, dimer of identical or non-identical chains of class I alcohol dehydrogenase: ADH1A, ADH1B, and ADH1C. Zn(2+) serves as cofactor.

The protein resides in the cytoplasm. The enzyme catalyses a primary alcohol + NAD(+) = an aldehyde + NADH + H(+). It carries out the reaction ethanol + NAD(+) = acetaldehyde + NADH + H(+). Functionally, alcohol dehydrogenase. Exhibits high activity for ethanol oxidation and plays a major role in ethanol catabolism. The protein is Alcohol dehydrogenase 1C (ADH1C) of Homo sapiens (Human).